Reading from the N-terminus, the 453-residue chain is Gamma-aminobutyric acid receptor subunit alpha-6 (453 aa).

An N-terminal signal peptide occupies residues methionine 1–glycine 19. At lysine 20–phenylalanine 243 the chain is on the extracellular side. N-linked (GlcNAc...) asparagine glycosylation is present at asparagine 31. Arginine 84 provides a ligand contact to 4-aminobutanoate. Residues asparagine 128 and asparagine 141 are each glycosylated (N-linked (GlcNAc...) asparagine). Position 147 (threonine 147) interacts with 4-aminobutanoate. A disulfide bond links cysteine 156 and cysteine 170. Residues methionine 244–isoleucine 264 form a helical membrane-spanning segment. The Cytoplasmic portion of the chain corresponds to asparagine 265–proline 270. The helical transmembrane segment at alanine 271–alanine 290 threads the bilayer. Residues arginine 291 to aspartate 304 lie on the Extracellular side of the membrane. A helical membrane pass occupies residues tryptophan 305–asparagine 325. Topologically, residues tyrosine 326–arginine 422 are cytoplasmic. A Phosphothreonine modification is found at threonine 403. A helical transmembrane segment spans residues isoleucine 423–lysine 443. At aspartate 444 to glutamate 453 the chain is on the extracellular side.

Belongs to the ligand-gated ion channel (TC 1.A.9) family. Gamma-aminobutyric acid receptor (TC 1.A.9.5) subfamily. GABRA6 sub-subfamily. As to quaternary structure, heteropentamer, formed by a combination of alpha (GABRA1-6), beta (GABRB1-3), gamma (GABRG1-3), delta (GABRD), epsilon (GABRE), rho (GABRR1-3), pi (GABRP) and theta (GABRQ) chains, each subunit exhibiting distinct physiological and pharmacological properties. Binds UBQLN1. Expressed in brain, in cerebellar granule cells.

It localises to the postsynaptic cell membrane. The protein localises to the cell membrane. It catalyses the reaction chloride(in) = chloride(out). Its function is as follows. Alpha subunit of the heteropentameric ligand-gated chloride channel gated by gamma-aminobutyric acid (GABA), a major inhibitory neurotransmitter in the brain. GABA-gated chloride channels, also named GABA(A) receptors (GABAAR), consist of five subunits arranged around a central pore and contain GABA active binding site(s) located at the alpha and beta subunit interface(s). When activated by GABA, GABAARs selectively allow the flow of chloride anions across the cell membrane down their electrochemical gradient. Alpha-6/GABRA6 subunits are found at both synaptic and extrasynaptic sites. Chloride influx into the postsynaptic neuron following GABAAR opening decreases the neuron ability to generate a new action potential, thereby reducing nerve transmission. Extrasynaptic alpha-6-containing receptors contribute to the tonic GABAergic inhibition. Alpha-6 subunits are also present on glutamatergic synapses. This chain is Gamma-aminobutyric acid receptor subunit alpha-6, found in Homo sapiens (Human).